Here is a 358-residue protein sequence, read N- to C-terminus: MKLTVTLPTHSYDLTIETGALDKIGTWVRSLWQPQRVAIITDETVNKLYGAAVEKELQAAGFETSLIAVAAGEQSKSLEIAQLLYDFLAEQQLTRSDGLIALGGGVVGDLAGFVASTYMRGIHFLQVPTTLLAQVDSSIGGKTAVNTKKAKNLVGTFAQPDGVLIDPNTLKTLEPRRVREGIAEIVKSAAIADVELWHRLSSLENEQDLVAHAEEIITACCKIKRDVVEEDELDLGLRLILNFGHTIGHALENTAGYGVIAHGEGVSLGMIQITQVAEQQGLSPLGTTQELVTMLEKFHLPVTTDRWSEERLYQAITHDKKTRGGQIKIIVLEKIGQAKIVSLPTEEIRAFLNREGGI.

NAD(+) contacts are provided by residues 105-109 (GVVGD), 129-130 (TT), lysine 142, lysine 151, and 169-172 (TLKT). Residues glutamate 184, histidine 245, and histidine 262 each coordinate Zn(2+).

The protein belongs to the sugar phosphate cyclases superfamily. Dehydroquinate synthase family. NAD(+) is required as a cofactor. Requires Co(2+) as cofactor. It depends on Zn(2+) as a cofactor.

It localises to the cytoplasm. The catalysed reaction is 7-phospho-2-dehydro-3-deoxy-D-arabino-heptonate = 3-dehydroquinate + phosphate. It functions in the pathway metabolic intermediate biosynthesis; chorismate biosynthesis; chorismate from D-erythrose 4-phosphate and phosphoenolpyruvate: step 2/7. In terms of biological role, catalyzes the conversion of 3-deoxy-D-arabino-heptulosonate 7-phosphate (DAHP) to dehydroquinate (DHQ). The chain is 3-dehydroquinate synthase from Enterococcus faecalis (strain ATCC 700802 / V583).